A 273-amino-acid chain; its full sequence is Nitrogenase iron protein 2 (273 aa).

An ATP-binding site is contributed by 8-15 (GKGGIGKS). Position 95 (Cys-95) interacts with [4Fe-4S] cluster. An ADP-ribosylarginine; by dinitrogenase reductase ADP-ribosyltransferase modification is found at Arg-98. [4Fe-4S] cluster is bound at residue Cys-130.

Belongs to the NifH/BchL/ChlL family. Homodimer. It depends on [4Fe-4S] cluster as a cofactor. In terms of processing, the reversible ADP-ribosylation of Arg-98 inactivates the nitrogenase reductase and regulates nitrogenase activity.

It carries out the reaction N2 + 8 reduced [2Fe-2S]-[ferredoxin] + 16 ATP + 16 H2O = H2 + 8 oxidized [2Fe-2S]-[ferredoxin] + 2 NH4(+) + 16 ADP + 16 phosphate + 6 H(+). Its function is as follows. The key enzymatic reactions in nitrogen fixation are catalyzed by the nitrogenase complex, which has 2 components: the iron protein and the molybdenum-iron protein. This is Nitrogenase iron protein 2 (nifH2) from Methanosarcina barkeri.